A 250-amino-acid polypeptide reads, in one-letter code: UPF0758 protein tlr1707 (250 aa).

The region spanning 116–239 (TIIDSPALAA…YQSLREITPL (124 aa)) is the MPN domain. 3 residues coordinate Zn(2+): histidine 188, histidine 190, and aspartate 201. Residues 188–201 (HNHPSGNLSPSQAD) carry the JAMM motif motif.

This sequence belongs to the UPF0758 family.

This chain is UPF0758 protein tlr1707, found in Thermosynechococcus vestitus (strain NIES-2133 / IAM M-273 / BP-1).